We begin with the raw amino-acid sequence, 265 residues long: Undecaprenyl-diphosphatase (265 aa).

The next 8 membrane-spanning stretches (helical) occupy residues 1–21 (MDIL…FLPI), 39–59 (QGLA…ILYF), 86–106 (WCII…GNFI), 112–132 (SVSV…FADA), 140–160 (LAQM…LAMI), 186–206 (FSFL…GLKL), 219–239 (VGVL…LSFI), and 244–264 (MLPF…LVWF).

This sequence belongs to the UppP family.

Its subcellular location is the cell inner membrane. It carries out the reaction di-trans,octa-cis-undecaprenyl diphosphate + H2O = di-trans,octa-cis-undecaprenyl phosphate + phosphate + H(+). Catalyzes the dephosphorylation of undecaprenyl diphosphate (UPP). Confers resistance to bacitracin. This chain is Undecaprenyl-diphosphatase, found in Saccharophagus degradans (strain 2-40 / ATCC 43961 / DSM 17024).